The sequence spans 142 residues: Large ribosomal subunit protein uL11 (142 aa).

It belongs to the universal ribosomal protein uL11 family. In terms of assembly, part of the ribosomal stalk of the 50S ribosomal subunit. Interacts with L10 and the large rRNA to form the base of the stalk. L10 forms an elongated spine to which L12 dimers bind in a sequential fashion forming a multimeric L10(L12)X complex. One or more lysine residues are methylated.

Functionally, forms part of the ribosomal stalk which helps the ribosome interact with GTP-bound translation factors. In Xylella fastidiosa (strain 9a5c), this protein is Large ribosomal subunit protein uL11.